The sequence spans 145 residues: Enhancer of mRNA-decapping protein 2 (145 aa).

Disordered stretches follow at residues 1-74 and 89-115; these read MGSE…DKAT and PKKK…IDSK. Over residues 29–42 the composition is skewed to polar residues; that stretch reads TKTQILVPPTQSLP. Residues 55–73 are compositionally biased toward basic and acidic residues; sequence QRREPRERTSKTGHEDDKA. Positions 89-102 are enriched in basic residues; it reads PKKKSCKYKKKKTR.

This sequence belongs to the EDC family.

Its subcellular location is the cytoplasm. The protein resides in the nucleus. In terms of biological role, mRNA-binding protein which stimulates mRNA decapping by DCP1 and DCP2. This is Enhancer of mRNA-decapping protein 2 (EDC2) from Saccharomyces cerevisiae (strain ATCC 204508 / S288c) (Baker's yeast).